The chain runs to 174 residues: Type II restriction enzyme Bsp6I (174 aa).

It catalyses the reaction Endonucleolytic cleavage of DNA to give specific double-stranded fragments with terminal 5'-phosphates.. In terms of biological role, a P subtype restriction enzyme that recognizes the double-stranded sequence 5'-GCNGC-3' and cleaves after C-2. The chain is Type II restriction enzyme Bsp6I from Bacillus sp. (strain RFL6).